The following is a 248-amino-acid chain: Granulin (248 aa).

Belongs to the polyhedrin family.

Its function is as follows. Component of the virus occlusion bodies, which are large proteinaceous structures, that protect the virus from the outside environment for extended periods until they are ingested by insect larvae. The protein is Granulin of Cydia pomonella (Codling moth).